The chain runs to 500 residues: Galactofuranose transporter ATP-binding protein YtfR (500 aa).

2 consecutive ABC transporter domains span residues 10-245 and 259-497; these read LRTE…LGRE and LSDK…IMNA. 42 to 49 contributes to the ATP binding site; that stretch reads GENGAGKS.

This sequence belongs to the ABC transporter superfamily. In terms of assembly, the complex is composed of two ATP-binding proteins (YtfR), two transmembrane proteins (YtfT and YjfF) and a solute-binding protein (YtfQ).

It localises to the cell inner membrane. The enzyme catalyses D-galactofuranose(out) + ATP + H2O = D-galactofuranose(in) + ADP + phosphate + H(+). Functionally, part of the ABC transporter complex YtfQRT-YjfF involved in galactofuranose transport. Responsible for energy coupling to the transport system. The sequence is that of Galactofuranose transporter ATP-binding protein YtfR (ytfR) from Escherichia coli (strain K12).